Consider the following 254-residue polypeptide: 14-3-3 protein 2 (254 aa).

This sequence belongs to the 14-3-3 family. As to quaternary structure, homodimer.

The sequence is that of 14-3-3 protein 2 (TFT2) from Solanum lycopersicum (Tomato).